Consider the following 230-residue polypeptide: uncharacterized protein (230 aa).

Residues 19–39 traverse the membrane as a helical segment; the sequence is GIFQVLLQLVLAMMTVWDFAG. Residue asparagine 41 is glycosylated (N-linked (GlcNAc...) asparagine; by host). Residues 55–75 form a helical membrane-spanning segment; sequence SFLLVLYTGLKQILEYMFSIC. 4 N-linked (GlcNAc...) asparagine; by host glycosylation sites follow: asparagine 86, asparagine 157, asparagine 168, and asparagine 182. The stretch at 172–196 forms a coiled coil; the sequence is TNLHKYQNDENDTEEDSEDIEKNSD. Residues 178-205 are disordered; the sequence is QNDENDTEEDSEDIEKNSDPKENSDIDS. Residues 180–190 are compositionally biased toward acidic residues; the sequence is DENDTEEDSED. A compositionally biased stretch (basic and acidic residues) spans 191 to 201; that stretch reads IEKNSDPKENS.

The protein localises to the membrane. This is an uncharacterized protein from Acanthamoeba polyphaga mimivirus (APMV).